A 1907-amino-acid polypeptide reads, in one-letter code: Receptor-type tyrosine-protein phosphatase S (1907 aa).

The signal sequence occupies residues 1 to 29 (MAPTWSPSVVSVVGPVGLFLVLLARGCLA). Topologically, residues 30-1257 (EEPPRFIREP…PQPIVDGEEG (1228 aa)) are extracellular. 3 consecutive Ig-like C2-type domains span residues 33-123 (PRFI…AKLT), 135-224 (PNID…ANLY), and 232-314 (PRFS…AQIT). 2 cysteine pairs are disulfide-bonded: cysteine 54-cysteine 107 and cysteine 156-cysteine 207. Residues 68–72 (KKGKK) are important for binding to glycosaminoglycan chains. N-linked (GlcNAc...) asparagine glycosylation is found at asparagine 250 and asparagine 295. A disulfide bridge links cysteine 253 with cysteine 298. Fibronectin type-III domains lie at 321–411 (APGT…TGEQ), 416–510 (APRN…TQQG), 514–603 (QPMN…TLQA), 608–705 (PPQD…TDED), 710–809 (PPRK…TKGA), 810–906 (VLGR…APRG), 907–1008 (FPQI…LARD), and 1011–1095 (SPKN…TAFN). Residues 691–700 (PGPESSPVVV) are compositionally biased toward low complexity. Residues 691 to 711 (PGPESSPVVVRTDEDVPSAPP) form a disordered region. Residue asparagine 720 is glycosylated (N-linked (GlcNAc...) asparagine). The N-linked (GlcNAc...) asparagine glycan is linked to asparagine 916. A helical membrane pass occupies residues 1258–1278 (LIWVIGPVLAVVFIICIVIAI). Residues 1279-1907 (LLYKNKPDSK…YLGSFDHYAT (629 aa)) lie on the Cytoplasmic side of the membrane. Residues 1286-1296 (DSKRKDSEPRT) are compositionally biased toward basic and acidic residues. The tract at residues 1286-1313 (DSKRKDSEPRTKCLLNNADLAPHHPKDP) is disordered. Tyrosine-protein phosphatase domains are found at residues 1352-1607 (LSQE…LLEA) and 1639-1898 (MELE…ALEY). Residues aspartate 1516, 1548–1554 (CSAGVGR), and glutamine 1592 contribute to the substrate site. Residue cysteine 1548 is the Phosphocysteine intermediate of the active site. Catalysis depends on cysteine 1839, which acts as the Phosphocysteine intermediate.

The protein belongs to the protein-tyrosine phosphatase family. Receptor class 2A subfamily. Binding to large heparan sulfate proteoglycan structures promotes oligomerization. Binding to chondroitin sulfate proteoglycan does not lead to oligomerization. Interacts (via Ig-like domains) with NTRK3. Interacts (via Ig-like domains) with NTRK1, but does not form detectable complexes with NTRK2. Interacts with PPFIA1, PPFIA2 and PPFIA3. A cleavage occurs, separating the extracellular domain from the transmembrane segment. This process called 'ectodomain shedding' is thought to be involved in receptor desensitization, signal transduction and/or membrane localization. As to expression, detected in brain cortex, cerebellum and thoracic spinal cord (at protein level). Detected in motor cortex and white matter of the spinal cord, but not in spinal cord gray matter. Isoform 1 and isoform 6 are predominantly expressed in the brain (cerebrum and cerebellum) and to a lesser extent in the heart and skeletal muscle. Also found in neuronal-derived cell lines. Detected in the ganglion cell layer of the retina and in glial cells along the optic nerve. Detected in bone marrow and spleen plasmacytoid dendritic cells.

The protein resides in the cell membrane. Its subcellular location is the cell projection. The protein localises to the axon. It localises to the perikaryon. It is found in the cytoplasmic vesicle. The protein resides in the secretory vesicle. Its subcellular location is the synaptic vesicle membrane. The protein localises to the synapse. It localises to the synaptosome. It is found in the postsynaptic density. The protein resides in the neuron projection. Its subcellular location is the growth cone. The enzyme catalyses O-phospho-L-tyrosyl-[protein] + H2O = L-tyrosyl-[protein] + phosphate. Functionally, cell surface receptor that binds to glycosaminoglycans, including chondroitin sulfate proteoglycans and heparan sulfate proteoglycans. Binding to chondroitin sulfate and heparan sulfate proteoglycans has opposite effects on PTPRS oligomerization and regulation of neurite outgrowth. Contributes to the inhibition of neurite and axonal outgrowth by chondroitin sulfate proteoglycans, also after nerve transection. Plays a role in stimulating neurite outgrowth in response to the heparan sulfate proteoglycan GPC2. Required for normal brain development, especially for normal development of the pituitary gland and the olfactory bulb. Functions as a tyrosine phosphatase. Mediates dephosphorylation of NTRK1, NTRK2 and NTRK3. Plays a role in down-regulation of signaling cascades that lead to the activation of Akt and MAP kinases. Down-regulates TLR9-mediated activation of NF-kappa-B, as well as production of TNF, interferon alpha and interferon beta. The chain is Receptor-type tyrosine-protein phosphatase S (Ptprs) from Mus musculus (Mouse).